Reading from the N-terminus, the 316-residue chain is Ribonuclease Z (316 aa).

Residues histidine 61, histidine 63, aspartate 65, histidine 66, histidine 152, aspartate 220, and histidine 279 each coordinate Zn(2+). Catalysis depends on aspartate 65, which acts as the Proton acceptor.

Belongs to the RNase Z family. Homodimer. The cofactor is Zn(2+).

It carries out the reaction Endonucleolytic cleavage of RNA, removing extra 3' nucleotides from tRNA precursor, generating 3' termini of tRNAs. A 3'-hydroxy group is left at the tRNA terminus and a 5'-phosphoryl group is left at the trailer molecule.. Functionally, zinc phosphodiesterase, which displays some tRNA 3'-processing endonuclease activity. Probably involved in tRNA maturation, by removing a 3'-trailer from precursor tRNA. The protein is Ribonuclease Z of Clostridium perfringens (strain ATCC 13124 / DSM 756 / JCM 1290 / NCIMB 6125 / NCTC 8237 / Type A).